Here is a 195-residue protein sequence, read N- to C-terminus: Phenoloxidase subunit 1 (195 aa).

Histidine 10 contributes to the Cu cation binding site. Asparagine 77, asparagine 97, and asparagine 98 each carry an N-linked (GlcNAc...) asparagine glycan.

Belongs to the tyrosinase family. As to quaternary structure, heterodimer. It depends on Cu(2+) as a cofactor.

The protein resides in the secreted. It carries out the reaction 2 L-dopa + O2 = 2 L-dopaquinone + 2 H2O. It catalyses the reaction L-tyrosine + O2 = L-dopaquinone + H2O. This is a copper-containing oxidase that functions in the formation of pigments such as melanins and other polyphenolic compounds. Catalyzes the rate-limiting conversions of tyrosine to DOPA, DOPA to DOPA-quinone and possibly 5,6 dihydroxyindole to indole-5'6 quinone. The polypeptide is Phenoloxidase subunit 1 (Simulium damnosum (Black fly)).